Here is a 680-residue protein sequence, read N- to C-terminus: Pilus tip adhesin Cpa (680 aa).

Positions 62 to 211 (CFNLTKHFPS…IFQSSDKTFQ (150 aa)) form a cross-link, isoglutamyl cysteine thioester (Cys-Gln). The interval 217–236 (EYVPDTPPKPGEEPPAKTEK) is disordered. The segment covering 226–236 (PGEEPPAKTEK) has biased composition (basic and acidic residues). The isoaspartyl lysine isopeptide (Lys-Asp) cross-link spans 243–546 (KYAEGDYSKL…ELIDVISMED (304 aa)). In terms of domain architecture, CNA-B spans 253–311 (LEGATLKLAQIEGSGFQEKIFDSNKSGEKVELPNGTYVLSELKPPQGYGVATPITFKVA). Residues 374–526 (CFNADLHSPP…FFVPNSSRYQ (153 aa)) constitute a cross-link (isoglutamyl cysteine thioester (Cys-Gln)). The segment at residues 562–667 (KTVTGTIADK…KEDETVAFEN (106 aa)) is a cross-link (isoaspartyl lysine isopeptide (Lys-Asn)). The short motif at 672–676 (VPPTG) is the VPPTG sorting signal element. Residue threonine 675 forms a Threonyl lysine isopeptide (Thr-Lys) (interchain with K-? in major pilin subunit) linkage. Positions 676 to 680 (GLTTD) are cleaved as a propeptide — removed by sortase.

Monomer. In terms of processing, proteolytically processed and assembled in pili through a transpeptidation reaction catalyzed by a sortase, which leads to a covalent link between Cpa and a major pilin subunit.

The protein resides in the fimbrium. Functionally, component of the pilus tip. Can bind covalently, via its two reactive thioester bonds, to molecular targets from host cell surface and can thus mediate adhesion of the streptococcal pili to host cells. Lysine side chains or a carbohydrate with a free amine group might be candidates for Cpa binding. In vitro, can covalently bind to spermidine, but it is unlikely that spermidine is the natural target of Cpa. The sequence is that of Pilus tip adhesin Cpa (cpa) from Streptococcus pyogenes.